Reading from the N-terminus, the 1437-residue chain is Envelopment polyprotein (1437 aa).

Positions 1 to 21 (MAISTSLLIVALLIKLCLVNT) are cleaved as a signal peptide. Topologically, residues 22–207 (APPISKCFQD…GYMASSICQN (186 aa)) are lumenal. Asparagine 65 and asparagine 88 each carry an N-linked (GlcNAc...) asparagine; by host glycan. The helical transmembrane segment at 208–228 (IELIIIIILTLAIFIFMCIIT) threads the bilayer. The Cytoplasmic segment spans residues 229-312 (RTYICYLMLP…RVARSLCKSK (84 aa)). Residues 313–333 (GSSLVISILTAMLILSFITPL) traverse the membrane as a helical segment. The Lumenal segment spans residues 334 to 373 (EAMTTNYPDDKKFTLKEVNDIVLGRDMEQELKSSILILMS). A helical transmembrane segment spans residues 374-394 (ICGIGIILIFFGLTVLLEIVL). Residues 395-460 (ELIAKRSTIF…TYYIKIRNLK (66 aa)) are Cytoplasmic-facing. A helical transmembrane segment spans residues 461-481 (LIMLIFSIVILMQNATMLVVA). Topologically, residues 482 to 1391 (GENCWTNTEI…EPLNNFFGNY (910 aa)) are lumenal. Asparagine 627 and asparagine 1173 each carry an N-linked (GlcNAc...) asparagine; by host glycan. The chain crosses the membrane as a helical span at residues 1392-1412 (LNMFLYILGGIILLFLALYIL). Residues 1413-1437 (MPMCARLRDELKRNERLHQMEMKKR) are Cytoplasmic-facing.

This sequence belongs to the orthobunyavirus envelope glycoprotein family. In terms of assembly, glycoprotein C and Glycoprotein N interact with each other. Specific enzymatic cleavages in vivo yield mature proteins including nonstructural protein NSm, Glycoprotein C, and Glycoprotein N.

It localises to the virion membrane. It is found in the host Golgi apparatus membrane. The protein resides in the host endoplasmic reticulum membrane. In terms of biological role, glycoprotein C and Glycoprotein N interact with each other and are present at the surface of the virion. They are able to attach the virion to a cell receptor and to promote fusion of membranes after endocytosis of the virion. The sequence is that of Envelopment polyprotein (GP) from Culex.